The primary structure comprises 206 residues: Isochorismatase domain-containing protein 2A (206 aa).

Position 26 is an N6-succinyllysine (lysine 26). N6-acetyllysine; alternate is present on residues lysine 93 and lysine 178. N6-succinyllysine; alternate occurs at positions 93 and 178. An N6-acetyllysine mark is found at lysine 182 and lysine 185.

The protein belongs to the isochorismatase family. As to quaternary structure, interacts with CDKN2A. Ubiquitous. Expressed predominantly in uterus, stomach and urinary tract.

It localises to the cytoplasm. The protein localises to the nucleus. The polypeptide is Isochorismatase domain-containing protein 2A (Mus musculus (Mouse)).